Reading from the N-terminus, the 489-residue chain is Mitochondrial distribution and morphology protein 34 (489 aa).

The SMP-LTD domain maps to 1-205 (MSFNINWDSI…LPSVLYKFSQ (205 aa)).

It belongs to the MDM34 family. As to quaternary structure, component of the ER-mitochondria encounter structure (ERMES) or MDM complex, composed of MMM1, MDM10, MDM12 and MDM34.

It localises to the mitochondrion outer membrane. In terms of biological role, component of the ERMES/MDM complex, which serves as a molecular tether to connect the endoplasmic reticulum (ER) and mitochondria. Components of this complex are involved in the control of mitochondrial shape and protein biogenesis, and function in nonvesicular lipid trafficking between the ER and mitochondria. MDM34 is required for the interaction of the ER-resident membrane protein MMM1 and the outer mitochondrial membrane-resident beta-barrel protein MDM10. This is Mitochondrial distribution and morphology protein 34 from Komagataella phaffii (strain GS115 / ATCC 20864) (Yeast).